A 149-amino-acid polypeptide reads, in one-letter code: UPF0179 protein rrnAC1064 (149 aa).

This sequence belongs to the UPF0179 family.

The sequence is that of UPF0179 protein rrnAC1064 from Haloarcula marismortui (strain ATCC 43049 / DSM 3752 / JCM 8966 / VKM B-1809) (Halobacterium marismortui).